We begin with the raw amino-acid sequence, 149 residues long: MERTFIAIKPDGVQRGLVGQIISRFETKGFTLVGLKIMTVTKELAEKHYDVHKERPFFSSLIEFIKSGPLVAMVWEGEGVVASARKIIGATNPLTAEPGTIRGDYGISLGRNLIHGSDAIETAQTEINLWFKEEELVSWKPTLTSWIVE.

K9, F57, R85, T91, R102, and N112 together coordinate ATP. The Pros-phosphohistidine intermediate role is filled by H115.

This sequence belongs to the NDK family. As to quaternary structure, homotetramer. Mg(2+) is required as a cofactor.

Its subcellular location is the cytoplasm. It carries out the reaction a 2'-deoxyribonucleoside 5'-diphosphate + ATP = a 2'-deoxyribonucleoside 5'-triphosphate + ADP. The catalysed reaction is a ribonucleoside 5'-diphosphate + ATP = a ribonucleoside 5'-triphosphate + ADP. In terms of biological role, major role in the synthesis of nucleoside triphosphates other than ATP. The ATP gamma phosphate is transferred to the NDP beta phosphate via a ping-pong mechanism, using a phosphorylated active-site intermediate. The chain is Nucleoside diphosphate kinase from Trichodesmium erythraeum (strain IMS101).